The primary structure comprises 96 residues: Uteroglobin (96 aa).

The first 19 residues, 1 to 19 (MKIAITITVLMLSICCSSA), serve as a signal peptide directing secretion.

The protein belongs to the secretoglobin family. In terms of assembly, antiparallel homodimer; disulfide-linked. Interaction with LMBR1L is controversial. Club cells (nonciliated cells of the surface epithelium of the pulmonary airways).

The protein resides in the secreted. Binds phosphatidylcholine, phosphatidylinositol, polychlorinated biphenyls (PCB) and weakly progesterone, potent inhibitor of phospholipase A2. The chain is Uteroglobin (Scgb1a1) from Rattus norvegicus (Rat).